The primary structure comprises 219 residues: 2-hydroxy-3-keto-5-methylthiopentenyl-1-phosphate phosphatase (219 aa).

The protein belongs to the HAD-like hydrolase superfamily. MtnX family.

It carries out the reaction 2-hydroxy-5-methylsulfanyl-3-oxopent-1-enyl phosphate + H2O = 1,2-dihydroxy-5-(methylsulfanyl)pent-1-en-3-one + phosphate. It participates in amino-acid biosynthesis; L-methionine biosynthesis via salvage pathway; L-methionine from S-methyl-5-thio-alpha-D-ribose 1-phosphate: step 4/6. Its function is as follows. Dephosphorylates 2-hydroxy-3-keto-5-methylthiopentenyl-1-phosphate (HK-MTPenyl-1-P) yielding 1,2-dihydroxy-3-keto-5-methylthiopentene (DHK-MTPene). The chain is 2-hydroxy-3-keto-5-methylthiopentenyl-1-phosphate phosphatase from Bacillus cereus (strain AH187).